Here is a 308-residue protein sequence, read N- to C-terminus: Transcription factor zip-2 (308 aa).

Over residues 217–229 the composition is skewed to polar residues; sequence QSSSSSTVETTIT. The disordered stretch occupies residues 217–277; sequence QSSSSSTVET…RESKEERERL (61 aa). Residues 242-305 form the bZIP domain; sequence SSDYRHKRDK…EDYKRLVMMF (64 aa). Positions 246–276 are basic motif; the sequence is RHKRDKNNLASQKSRQKRQAKIRESKEERER. A compositionally biased stretch (basic and acidic residues) spans 266–277; that stretch reads KIRESKEERERL. The tract at residues 277–291 is leucine-zipper; that stretch reads LEKRKVQLQAMVLTL.

Belongs to the bZIP family. C/EBP subfamily. Expressed in the pharynx and throughout the intestine.

The protein resides in the nucleus. In terms of biological role, transcription factor that binds to the promoter and the enhancer regions of target genes. May act together with the bZIP transcription factor, cebp-2. Involved in responding to mitochondrial damage. Plays a role in the delay of age-associated mitochondrial fragmentation and muscle decline. Has a protective role in response to infection by the Gram-negative bacterium P.aeruginosa. Required to prevent P.aeruginosa ToxA-mediated lethality. Required for the activation of several infection response genes including irg-1 and irg-2 following P.aeruginosa infection; target gene activation may involve effects of the bacterial toxin, ToxA, and perhaps other toxins. This is Transcription factor zip-2 from Caenorhabditis elegans.